A 286-amino-acid polypeptide reads, in one-letter code: Alpha-ketoglutarate-dependent dioxygenase alkB homolog 3 (286 aa).

Positions 1-38 (MEDKRRRARVQGAWAGPAKSQATAQPAPTAENNLQQRP) are disordered. Polar residues predominate over residues 20-36 (SQATAQPAPTAENNLQQ). Substrate contacts are provided by residues tryptophan 115 and 141 to 143 (YTY). The Fe2OG dioxygenase domain maps to 172–278 (SFNSLLCNLY…RINLTFRTVY (107 aa)). Position 177 is a (4R)-5-hydroxyleucine; alternate (leucine 177). Leucine 177 carries the (4R)-5-oxoleucine; alternate modification. Residue 179 to 181 (NLY) coordinates 2-oxoglutarate. The Fe cation site is built by histidine 191 and aspartate 193. Aspartate 194 provides a ligand contact to substrate. Fe cation is bound at residue histidine 257. 2-oxoglutarate is bound by residues 269–275 (RINLTFR) and arginine 275.

This sequence belongs to the alkB family. In terms of assembly, interacts with the ASCC complex composed of ASCC1, ASCC2 and ASCC3. Interacts directly with ASCC3, and is thereby recruited to the ASCC complex. Interacts with OTUD4; the interaction is direct. Interacts with USP7 and USP9X. Requires Fe(2+) as cofactor. In terms of processing, ubiquitinated; undergoes 'Lys-48'-linked polyubiquitination. OTUD4 promotes USP7 and USP9X-dependent deubiquitination of 'Lys-48'-polyubiquitinated ALKBH3 promoting the repair of alkylated DNA lesions.

The protein resides in the nucleus. It is found in the cytoplasm. The catalysed reaction is an N(1)-methyladenosine in mRNA + 2-oxoglutarate + O2 = an adenosine in mRNA + formaldehyde + succinate + CO2. It carries out the reaction a methylated nucleobase within DNA + 2-oxoglutarate + O2 = a nucleobase within DNA + formaldehyde + succinate + CO2. It catalyses the reaction an N(1)-methyl-2'-deoxyadenosine in single-stranded DNA + 2-oxoglutarate + O2 = a 2'-deoxyadenosine in single-stranded DNA + formaldehyde + succinate + CO2 + H(+). The enzyme catalyses an N(3)-methyl-2'-deoxycytidine in single-stranded DNA + 2-oxoglutarate + O2 = a 2'-deoxycytidine in single-stranded DNA + formaldehyde + succinate + CO2 + H(+). The catalysed reaction is a 3,N(4)-etheno-2'-deoxycytidine in single-stranded DNA + 2-oxoglutarate + O2 + H2O = a 2'-deoxycytidine in single-stranded DNA + glyoxal + succinate + CO2. Activated by ascorbate. Its function is as follows. Dioxygenase that mediates demethylation of DNA and RNA containing 1-methyladenosine (m1A). Repairs alkylated DNA containing 1-methyladenosine (m1A) and 3-methylcytosine (m3C) by oxidative demethylation. Has a strong preference for single-stranded DNA. Able to process alkylated m3C within double-stranded regions via its interaction with ASCC3, which promotes DNA unwinding to generate single-stranded substrate needed for ALKBH3. Can repair exocyclic 3,N4-ethenocytosine adducs in single-stranded DNA. Also acts on RNA. Demethylates N(1)-methyladenosine (m1A) RNA, an epigenetic internal modification of messenger RNAs (mRNAs) highly enriched within 5'-untranslated regions (UTRs) and in the vicinity of start codons. Requires molecular oxygen, alpha-ketoglutarate and iron. The protein is Alpha-ketoglutarate-dependent dioxygenase alkB homolog 3 of Bos taurus (Bovine).